The primary structure comprises 63 residues: Toxin Cn11 (63 aa).

An LCN-type CS-alpha/beta domain is found at 2 to 63 (RDGYPVDEKG…KVWTYETNTC (62 aa)). Disulfide bonds link C12/C63, C16/C37, C23/C44, and C27/C46.

This sequence belongs to the long (4 C-C) scorpion toxin superfamily. Sodium channel inhibitor family. In terms of tissue distribution, expressed by the venom gland.

Its subcellular location is the secreted. First blocker of sodium channels (Nav) found in scorpions. Is lethal to crustaceans (Cambarellus montezumae), less toxic to insects (crickets) and non-toxic to mammals (mice) at the doses assayed. The polypeptide is Toxin Cn11 (Centruroides noxius (Mexican scorpion)).